The sequence spans 367 residues: 4-hydroxy-3-methylbut-2-en-1-yl diphosphate synthase (flavodoxin) (367 aa).

Residues cysteine 265, cysteine 268, cysteine 300, and glutamate 307 each contribute to the [4Fe-4S] cluster site.

The protein belongs to the IspG family. [4Fe-4S] cluster is required as a cofactor.

The enzyme catalyses (2E)-4-hydroxy-3-methylbut-2-enyl diphosphate + oxidized [flavodoxin] + H2O + 2 H(+) = 2-C-methyl-D-erythritol 2,4-cyclic diphosphate + reduced [flavodoxin]. It functions in the pathway isoprenoid biosynthesis; isopentenyl diphosphate biosynthesis via DXP pathway; isopentenyl diphosphate from 1-deoxy-D-xylulose 5-phosphate: step 5/6. Its function is as follows. Converts 2C-methyl-D-erythritol 2,4-cyclodiphosphate (ME-2,4cPP) into 1-hydroxy-2-methyl-2-(E)-butenyl 4-diphosphate. This chain is 4-hydroxy-3-methylbut-2-en-1-yl diphosphate synthase (flavodoxin), found in Bacillus anthracis.